A 336-amino-acid chain; its full sequence is tRNA N6-adenosine threonylcarbamoyltransferase (336 aa).

Residues His-115 and His-119 each coordinate Fe cation. Substrate-binding positions include 137–141 (LVSGG), Asp-170, Gly-183, Asp-187, and Asn-276. Asp-302 is a Fe cation binding site.

It belongs to the KAE1 / TsaD family. Fe(2+) serves as cofactor.

It localises to the cytoplasm. The catalysed reaction is L-threonylcarbamoyladenylate + adenosine(37) in tRNA = N(6)-L-threonylcarbamoyladenosine(37) in tRNA + AMP + H(+). Functionally, required for the formation of a threonylcarbamoyl group on adenosine at position 37 (t(6)A37) in tRNAs that read codons beginning with adenine. Is involved in the transfer of the threonylcarbamoyl moiety of threonylcarbamoyl-AMP (TC-AMP) to the N6 group of A37, together with TsaE and TsaB. TsaD likely plays a direct catalytic role in this reaction. This chain is tRNA N6-adenosine threonylcarbamoyltransferase, found in Streptococcus suis (strain 98HAH33).